The primary structure comprises 308 residues: Methionyl-tRNA formyltransferase (308 aa).

(6S)-5,6,7,8-tetrahydrofolate is bound at residue 110-113; sequence SLLP.

It belongs to the Fmt family.

The enzyme catalyses L-methionyl-tRNA(fMet) + (6R)-10-formyltetrahydrofolate = N-formyl-L-methionyl-tRNA(fMet) + (6S)-5,6,7,8-tetrahydrofolate + H(+). In terms of biological role, attaches a formyl group to the free amino group of methionyl-tRNA(fMet). The formyl group appears to play a dual role in the initiator identity of N-formylmethionyl-tRNA by promoting its recognition by IF2 and preventing the misappropriation of this tRNA by the elongation apparatus. This Neisseria gonorrhoeae (strain NCCP11945) protein is Methionyl-tRNA formyltransferase.